The sequence spans 185 residues: C-type lectin domain family 5 member A (185 aa).

Residues 1 to 4 lie on the Cytoplasmic side of the membrane; it reads MNWH. Residues 5–27 form a helical; Signal-anchor for type II membrane protein membrane-spanning segment; the sequence is MIISGLIVVVLKIVGMTFFLLYF. Residues 28–185 lie on the Extracellular side of the membrane; that stretch reads PQIFGEHNVS…YRSICEKSAQ (158 aa). N-linked (GlcNAc...) asparagine glycans are attached at residues N35 and N55. The cysteines at positions 68 and 79 are disulfide-linked. Residues 75–181 enclose the C-type lectin domain; it reads HQGRCFFLST…CDVNYRSICE (107 aa). N-linked (GlcNAc...) asparagine glycans are attached at residues N90, N117, N141, and N146. 2 cysteine pairs are disulfide-bonded: C96/C180 and C158/C172.

Monomer. Homodimer. The majority of CLEC5A is expressed as a monomeric form on macrophages. Interacts with TYROBP/DAP12. The interaction with TYROBP is required for CLEC5 cell surface expression. Interacts with HCST/DAP10. Forms a CLEC5A/TYROBP/HCST trimolecular complex depending almost solely on TYROBP. In terms of processing, N-glycosylated. Contains sialic acid residues. In terms of tissue distribution, constitutively expressed in monocytes and macrophages.

The protein resides in the cell membrane. Its function is as follows. Functions as a positive regulator of osteoclastogenesis. Cell surface receptor that signals via TYROBP. Regulates inflammatory responses. In Sus scrofa (Pig), this protein is C-type lectin domain family 5 member A (CLEC5A).